A 206-amino-acid chain; its full sequence is Large ribosomal subunit protein uL4 (206 aa).

The disordered stretch occupies residues 63–97 (MYKQKGTGRARHHSARAPQFRGGGKAHGPVVRSHE). Positions 64-77 (YKQKGTGRARHHSA) are enriched in basic residues.

This sequence belongs to the universal ribosomal protein uL4 family. In terms of assembly, part of the 50S ribosomal subunit.

One of the primary rRNA binding proteins, this protein initially binds near the 5'-end of the 23S rRNA. It is important during the early stages of 50S assembly. It makes multiple contacts with different domains of the 23S rRNA in the assembled 50S subunit and ribosome. Its function is as follows. Forms part of the polypeptide exit tunnel. The sequence is that of Large ribosomal subunit protein uL4 from Rhizobium etli (strain CIAT 652).